We begin with the raw amino-acid sequence, 147 residues long: Protein archease (147 aa).

Ca(2+)-binding residues include Asp-17, Asp-146, and Val-147.

Belongs to the archease family.

Functionally, activates the tRNA-splicing ligase complex by facilitating the enzymatic turnover of catalytic subunit RtcB. Acts by promoting the guanylylation of RtcB, a key intermediate step in tRNA ligation. Can also alter the NTP specificity of RtcB such that ATP, dGTP or ITP is used efficiently. This is Protein archease from Pyrobaculum islandicum (strain DSM 4184 / JCM 9189 / GEO3).